Reading from the N-terminus, the 169-residue chain is Tumor suppressor ARF (169 aa).

The tract at residues 1 to 63 is interaction with CDK5RAP3 and MDM2; that stretch reads MGRRFLVTVR…RRGPHRNPGP (63 aa). The interval 54 to 73 is disordered; it reads RRGPHRNPGPGDDDGQRSRS.

As to quaternary structure, does not interact with cyclins, CDK1, CDK2, CDK4, CDK5 or CDK6. Interacts with COMMD1. Binds to BCL6, E2F1, HUWE1, MDM2, MYC, NPM1/B23, TOP1/TOPOI and UBE2I/UBC9. Interacts with TBRG1. Interacts with CDKN2AIP and E4F1. Interacts with CDK5RAP3 and MDM2; form a ternary complex involved in regulation of p53/TP53. Interacts with NOP53; the interaction is direct and promotes ARF nucleoplasmic relocalization and ubiquitin-mediated proteasomal degradation. Interacts with TTF1 (via the N-terminal region (NRD) and a C-terminal region); the interaction is direct and inhibits the nucleolar localization of TTF1. In terms of assembly, interacts with C1QBP. In terms of processing, ubiquitinated in normal cells by TRIP12 via the ubiquitin fusion degradation (UFD) pathway, a process that mediates ubiquitination at the N-terminus, regardless of the absence of lysine residues. Ubiquitination leads to its proteasomal degradation. In cancer cells, however, TRIP12 is located in a different cell compartment, preventing ubiquitination and degradation.

It is found in the nucleus. The protein localises to the nucleolus. The protein resides in the nucleoplasm. Its subcellular location is the mitochondrion. Functionally, capable of inducing cell cycle arrest in G1 and G2 phases. Acts as a tumor suppressor. Binds to MDM2 and blocks its nucleocytoplasmic shuttling by sequestering it in the nucleolus. This inhibits the oncogenic action of MDM2 by blocking MDM2-induced degradation of p53 and enhancing p53-dependent transactivation and apoptosis. Also induces G2 arrest and apoptosis in a p53-independent manner by preventing the activation of cyclin B1/CDC2 complexes. Binds to BCL6 and down-regulates BCL6-induced transcriptional repression. Binds to E2F1 and MYC and blocks their transcriptional activator activity but has no effect on MYC transcriptional repression. Binds to TOP1/TOPOI and stimulates its activity. This complex binds to rRNA gene promoters and may play a role in rRNA transcription and/or maturation. Interacts with NPM1/B23 and promotes its polyubiquitination and degradation, thus inhibiting rRNA processing. Plays a role in inhibiting ribosome biogenesis, perhaps by binding to the nucleolar localization sequence of transcription termination factor TTF1, and thereby preventing nucleolar localization of TTF1. Interacts with COMMD1 and promotes its 'Lys63'-linked polyubiquitination. Interacts with UBE2I/UBC9 and enhances sumoylation of a number of its binding partners including MDM2 and E2F1. Binds to HUWE1 and represses its ubiquitin ligase activity. May play a role in controlling cell proliferation and apoptosis during mammary gland development. Its function is as follows. May be involved in regulation of autophagy and caspase-independent cell death; the short-lived mitochondrial isoform is stabilized by C1QBP. The protein is Tumor suppressor ARF of Mus musculus (Mouse).